Here is a 411-residue protein sequence, read N- to C-terminus: GPI-anchor transamidase (411 aa).

A signal peptide spans 1 to 22 (MRIAMHLPLLLLYIFLLPLSGA). The Lumenal portion of the chain corresponds to 23 to 376 (NNTDAAHEVI…DIDSNECFFT (354 aa)). Residues H157 and C199 contribute to the active site. Residues N256 and N346 are each glycosylated (N-linked (GlcNAc...) asparagine). A helical transmembrane segment spans residues 377–397 (SFKQSATIILALIVTILWFML). Residues 398–411 (RGNTAKATYDLYTN) are Cytoplasmic-facing.

Belongs to the peptidase C13 family. As to quaternary structure, forms a complex with CDC91, GPI16, GPI17 and GAA1. In terms of processing, the disulfide bond between GPI8 and GPI16 is important for normal enzyme activity.

It is found in the endoplasmic reticulum membrane. Its pathway is glycolipid biosynthesis; glycosylphosphatidylinositol-anchor biosynthesis. In terms of biological role, mediates GPI anchoring in the endoplasmic reticulum, by replacing a protein's C-terminal GPI attachment signal peptide with a pre-assembled GPI. During this transamidation reaction, the GPI transamidase forms a carbonyl intermediate with the substrate protein. The polypeptide is GPI-anchor transamidase (GPI8) (Saccharomyces cerevisiae (strain ATCC 204508 / S288c) (Baker's yeast)).